A 96-amino-acid polypeptide reads, in one-letter code: Non-specific lipid-transfer protein 2 (96 aa).

The N-terminal stretch at 1-27 is a signal peptide; the sequence is MMRKLAVLVLAVAMVAACGGGVVGVAG. Intrachain disulfides connect C30-C62, C38-C52, C53-C88, and C64-C95.

Transfer lipids across membranes. May play a role in plant defense or in the biosynthesis of cuticle layers. In Oryza sativa subsp. japonica (Rice), this protein is Non-specific lipid-transfer protein 2 (LTP-2).